A 585-amino-acid polypeptide reads, in one-letter code: MSFQAMETFAEISQEILMSATKPPDFDFVLEQVGNYGTYQIVFFFIICLPTSLPSAFSAFNIPFVVGNPPHTCHIPEGKEYLRPLTNDTQILSCKQYNETQINVFRAFTSAPVDTYSDRISLVPCQNGWDYDNSTYLDSLVTEFNLVCDQQAWIEISTTSFYVGSFIGNCLFGYVADKFGRRRSFFVILTVLIVCGTASSFAKDIESFIILRFFTGLAFPALFQIPFIICMEFMGNSGRIFSGLMTSLFFGAAMALLGVVAMFIRRWRQLTFFCNAPFAFYIIYYFFLPESPRWSVSVGKWADAKKQLKKIAKMNGKSNVDVDELVDSMKNHQNAAEEKETKRSHNVTDLFKTPNLRRKTLIVTYIWVMNAIIYNGLTLNVSNLPVDDYWSFIINGAVELPGYFVVWPLLQCAGRRWTLAATMIVCGIGCVSAMFMPDGYPWLVASASFIGKFGVGSGFAVIYIFAGELYPTVVRAIGMGMSSMVAGSGLLLAPHIVNLGKIVKILPLLIMGLMALSAGILTFFLPETLGAPLPMTIEDAENFGKKPEPDSGMFTQAAKKRESQPLLEPHTPMDRRRRSSRLMNI.

At 1 to 40 (MSFQAMETFAEISQEILMSATKPPDFDFVLEQVGNYGTYQ) the chain is on the cytoplasmic side. Residues 41-61 (IVFFFIICLPTSLPSAFSAFN) form a helical membrane-spanning segment. Over 62–155 (IPFVVGNPPH…LVCDQQAWIE (94 aa)) the chain is Extracellular. N-linked (GlcNAc...) asparagine glycosylation is found at asparagine 87, asparagine 98, and asparagine 133. The helical transmembrane segment at 156–176 (ISTTSFYVGSFIGNCLFGYVA) threads the bilayer. Residues 177-184 (DKFGRRRS) lie on the Cytoplasmic side of the membrane. A helical membrane pass occupies residues 185-205 (FFVILTVLIVCGTASSFAKDI). Residues 206–212 (ESFIILR) lie on the Extracellular side of the membrane. A helical membrane pass occupies residues 213-233 (FFTGLAFPALFQIPFIICMEF). The Cytoplasmic segment spans residues 234–243 (MGNSGRIFSG). The helical transmembrane segment at 244–264 (LMTSLFFGAAMALLGVVAMFI) threads the bilayer. Topologically, residues 265–269 (RRWRQ) are extracellular. Residues 270 to 290 (LTFFCNAPFAFYIIYYFFLPE) traverse the membrane as a helical segment. Residues 291 to 360 (SPRWSVSVGK…FKTPNLRRKT (70 aa)) are Cytoplasmic-facing. Residues 361-381 (LIVTYIWVMNAIIYNGLTLNV) form a helical membrane-spanning segment. Residues 382 to 389 (SNLPVDDY) are Extracellular-facing. Residues 390-410 (WSFIINGAVELPGYFVVWPLL) traverse the membrane as a helical segment. Over 411 to 416 (QCAGRR) the chain is Cytoplasmic. Residues 417–437 (WTLAATMIVCGIGCVSAMFMP) form a helical membrane-spanning segment. At 438 to 446 (DGYPWLVAS) the chain is on the extracellular side. The helical transmembrane segment at 447–467 (ASFIGKFGVGSGFAVIYIFAG) threads the bilayer. Over 468–476 (ELYPTVVRA) the chain is Cytoplasmic. Residues 477 to 497 (IGMGMSSMVAGSGLLLAPHIV) traverse the membrane as a helical segment. At 498-504 (NLGKIVK) the chain is on the extracellular side. A helical transmembrane segment spans residues 505 to 525 (ILPLLIMGLMALSAGILTFFL). Over 526-585 (PETLGAPLPMTIEDAENFGKKPEPDSGMFTQAAKKRESQPLLEPHTPMDRRRRSSRLMNI) the chain is Cytoplasmic. Residues 544–585 (GKKPEPDSGMFTQAAKKRESQPLLEPHTPMDRRRRSSRLMNI) are disordered. Residues 575–585 (RRRRSSRLMNI) show a composition bias toward basic residues.

Belongs to the major facilitator (TC 2.A.1) superfamily. Organic cation transporter (TC 2.A.1.19) family.

It localises to the membrane. Its function is as follows. Transports organic cations such as tetraethylammonium (TEA). Displays a broad substrate specificity. The sequence is that of Organic cation transporter 1 (oct-1) from Caenorhabditis elegans.